Consider the following 275-residue polypeptide: tRNA pseudouridine synthase B (275 aa).

The active-site Nucleophile is D38.

It belongs to the pseudouridine synthase TruB family. Type 1 subfamily.

The catalysed reaction is uridine(55) in tRNA = pseudouridine(55) in tRNA. Functionally, responsible for synthesis of pseudouridine from uracil-55 in the psi GC loop of transfer RNAs. In Nitratiruptor sp. (strain SB155-2), this protein is tRNA pseudouridine synthase B.